The following is a 319-amino-acid chain: Methionyl-tRNA formyltransferase (319 aa).

110–113 (SLLP) provides a ligand contact to (6S)-5,6,7,8-tetrahydrofolate.

This sequence belongs to the Fmt family.

It catalyses the reaction L-methionyl-tRNA(fMet) + (6R)-10-formyltetrahydrofolate = N-formyl-L-methionyl-tRNA(fMet) + (6S)-5,6,7,8-tetrahydrofolate + H(+). Attaches a formyl group to the free amino group of methionyl-tRNA(fMet). The formyl group appears to play a dual role in the initiator identity of N-formylmethionyl-tRNA by promoting its recognition by IF2 and preventing the misappropriation of this tRNA by the elongation apparatus. The chain is Methionyl-tRNA formyltransferase from Geobacillus thermodenitrificans (strain NG80-2).